Here is a 42-residue protein sequence, read N- to C-terminus: Large ribosomal subunit protein bL36 (42 aa).

It belongs to the bacterial ribosomal protein bL36 family.

In Anaplasma marginale (strain St. Maries), this protein is Large ribosomal subunit protein bL36.